We begin with the raw amino-acid sequence, 36 residues long: Photosystem II reaction center protein Psb30 (36 aa).

A helical membrane pass occupies residues 8 to 28; it reads IIAQLTVVTLTLLAGPVIVFL.

It belongs to the Psb30/Ycf12 family. In terms of assembly, PSII is composed of 1 copy each of membrane proteins PsbA, PsbB, PsbC, PsbD, PsbE, PsbF, PsbH, PsbI, PsbJ, PsbK, PsbL, PsbM, PsbT, PsbX, PsbY, PsbZ, Psb30/Ycf12, peripheral proteins of the oxygen-evolving complex and a large number of cofactors. It forms dimeric complexes.

Its subcellular location is the plastid. The protein resides in the cyanelle thylakoid membrane. Its function is as follows. A core subunit of photosystem II (PSII), probably helps stabilize the reaction center. This chain is Photosystem II reaction center protein Psb30, found in Cyanophora paradoxa.